Here is a 312-residue protein sequence, read N- to C-terminus: HPr kinase/phosphorylase (312 aa).

Catalysis depends on residues H139 and K160. 154-161 provides a ligand contact to ATP; the sequence is GSSGVGKS. Residue S161 participates in Mg(2+) binding. D178 serves as the catalytic Proton acceptor; for phosphorylation activity. Proton donor; for dephosphorylation activity. The segment at 202–211 is important for the catalytic mechanism of both phosphorylation and dephosphorylation; it reads LEIRGLGIIN. E203 is a Mg(2+) binding site. The active site involves R244. The important for the catalytic mechanism of dephosphorylation stretch occupies residues 265–270; that stretch reads PVRPGR.

Belongs to the HPrK/P family. Homohexamer. It depends on Mg(2+) as a cofactor.

It catalyses the reaction [HPr protein]-L-serine + ATP = [HPr protein]-O-phospho-L-serine + ADP + H(+). It carries out the reaction [HPr protein]-O-phospho-L-serine + phosphate + H(+) = [HPr protein]-L-serine + diphosphate. Functionally, catalyzes the ATP- as well as the pyrophosphate-dependent phosphorylation of a specific serine residue in HPr, a phosphocarrier protein of the phosphoenolpyruvate-dependent sugar phosphotransferase system (PTS). HprK/P also catalyzes the pyrophosphate-producing, inorganic phosphate-dependent dephosphorylation (phosphorolysis) of seryl-phosphorylated HPr (P-Ser-HPr). The two antagonistic activities of HprK/P are regulated by several intracellular metabolites, which change their concentration in response to the absence or presence of rapidly metabolisable carbon sources (glucose, fructose, etc.) in the growth medium. Therefore, by controlling the phosphorylation state of HPr, HPrK/P is a sensor enzyme that plays a major role in the regulation of carbon metabolism and sugar transport: it mediates carbon catabolite repression (CCR), and regulates PTS-catalyzed carbohydrate uptake and inducer exclusion. This Listeria welshimeri serovar 6b (strain ATCC 35897 / DSM 20650 / CCUG 15529 / CIP 8149 / NCTC 11857 / SLCC 5334 / V8) protein is HPr kinase/phosphorylase.